A 242-amino-acid chain; its full sequence is Ribonuclease PH (242 aa).

Phosphate-binding positions include Arg-89 and 127 to 129 (GTR).

This sequence belongs to the RNase PH family. In terms of assembly, homohexameric ring arranged as a trimer of dimers.

The enzyme catalyses tRNA(n+1) + phosphate = tRNA(n) + a ribonucleoside 5'-diphosphate. Phosphorolytic 3'-5' exoribonuclease that plays an important role in tRNA 3'-end maturation. Removes nucleotide residues following the 3'-CCA terminus of tRNAs; can also add nucleotides to the ends of RNA molecules by using nucleoside diphosphates as substrates, but this may not be physiologically important. Probably plays a role in initiation of 16S rRNA degradation (leading to ribosome degradation) during starvation. In Neisseria gonorrhoeae (strain ATCC 700825 / FA 1090), this protein is Ribonuclease PH.